The primary structure comprises 38 residues: Large ribosomal subunit protein bL36 (38 aa).

It belongs to the bacterial ribosomal protein bL36 family.

The chain is Large ribosomal subunit protein bL36 from Chlorobaculum parvum (strain DSM 263 / NCIMB 8327) (Chlorobium vibrioforme subsp. thiosulfatophilum).